The sequence spans 433 residues: UDP-N-acetylglucosamine 1-carboxyvinyltransferase (433 aa).

A phosphoenolpyruvate-binding site is contributed by 22–23 (KN). R96 lines the UDP-N-acetyl-alpha-D-glucosamine pocket. C120 functions as the Proton donor in the catalytic mechanism. C120 is modified (2-(S-cysteinyl)pyruvic acid O-phosphothioketal). UDP-N-acetyl-alpha-D-glucosamine contacts are provided by residues 125-129 (RPIDL), D308, and I330.

The protein belongs to the EPSP synthase family. MurA subfamily.

The protein resides in the cytoplasm. It catalyses the reaction phosphoenolpyruvate + UDP-N-acetyl-alpha-D-glucosamine = UDP-N-acetyl-3-O-(1-carboxyvinyl)-alpha-D-glucosamine + phosphate. The protein operates within cell wall biogenesis; peptidoglycan biosynthesis. Functionally, cell wall formation. Adds enolpyruvyl to UDP-N-acetylglucosamine. This is UDP-N-acetylglucosamine 1-carboxyvinyltransferase from Koribacter versatilis (strain Ellin345).